We begin with the raw amino-acid sequence, 192 residues long: Elongation factor P (192 aa).

This sequence belongs to the elongation factor P family.

It localises to the cytoplasm. The protein operates within protein biosynthesis; polypeptide chain elongation. Its function is as follows. Involved in peptide bond synthesis. Stimulates efficient translation and peptide-bond synthesis on native or reconstituted 70S ribosomes in vitro. Probably functions indirectly by altering the affinity of the ribosome for aminoacyl-tRNA, thus increasing their reactivity as acceptors for peptidyl transferase. The sequence is that of Elongation factor P (efp) from Aquifex aeolicus (strain VF5).